A 336-amino-acid polypeptide reads, in one-letter code: Cell division protein ZipA (336 aa).

The Periplasmic portion of the chain corresponds to 1–2 (ME). Residues 3–23 (LHILFFILAGLLIAVLISFSL) traverse the membrane as a helical segment. Topologically, residues 24 to 336 (WSARREKSRI…SRQSYLARVS (313 aa)) are cytoplasmic. Residues 56 to 77 (PSLNPQSYAQTTGQHGETEADN) form a disordered region. Polar residues predominate over residues 59 to 70 (NPQSYAQTTGQH).

It belongs to the ZipA family. Interacts with FtsZ via their C-terminal domains.

The protein resides in the cell inner membrane. Its function is as follows. Essential cell division protein that stabilizes the FtsZ protofilaments by cross-linking them and that serves as a cytoplasmic membrane anchor for the Z ring. Also required for the recruitment to the septal ring of downstream cell division proteins. In Actinobacillus pleuropneumoniae serotype 3 (strain JL03), this protein is Cell division protein ZipA.